A 177-amino-acid polypeptide reads, in one-letter code: Parathyroid hormone-related protein (177 aa).

Residues 1-24 (MLWRLVQQWSVAVFLLSYSVPSCG) form the signal peptide. A propeptide spanning residues 25 to 34 (RSVEELGRRL) is cleaved from the precursor. The segment at 57-68 (RFFLHHLIAEIH) is important for receptor binding. The tract at residues 74–149 (ATSEVSPNSK…KRRTRSAWLT (76 aa)) is disordered. A compositionally biased stretch (polar residues) spans 76–90 (SEVSPNSKPAPNTKN). The short motif at 108–129 (TNKVETYKEQPLKTPGKKKKSK) is the Nuclear localization signal element. Positions 109–118 (NKVETYKEQP) are enriched in basic and acidic residues. Basic residues predominate over residues 122 to 132 (PGKKKKSKPGK).

This sequence belongs to the parathyroid hormone family. As to quaternary structure, PTHrP interacts with PTH1R (via N-terminal extracellular domain). In terms of processing, there are several secretory forms, including osteostatin, arising from endoproteolytic cleavage of the initial translation product. Each of these secretory forms is believed to have one or more of its own receptors that mediates the normal paracrine, autocrine and endocrine actions.

It is found in the secreted. The protein resides in the cytoplasm. Its subcellular location is the nucleus. In terms of biological role, neuroendocrine peptide which is a critical regulator of cellular and organ growth, development, migration, differentiation and survival and of epithelial calcium ion transport. Acts by binding to its receptor, PTH1R, activating G protein-coupled receptor signaling. Regulates endochondral bone development and epithelial-mesenchymal interactions during the formation of the mammary glands and teeth. Required for skeletal homeostasis. Promotes mammary mesenchyme differentiation and bud outgrowth by modulating mesenchymal cell responsiveness to BMPs. Up-regulates BMPR1A expression in the mammary mesenchyme and this increases the sensitivity of these cells to BMPs and allows them to respond to BMP4 in a paracrine and/or autocrine fashion. BMP4 signaling in the mesenchyme, in turn, triggers epithelial outgrowth and augments MSX2 expression, which causes the mammary mesenchyme to inhibit hair follicle formation within the nipple sheath. Its function is as follows. Potent inhibitor of osteoclastic bone resorption. This Bos taurus (Bovine) protein is Parathyroid hormone-related protein (PTHLH).